The sequence spans 357 residues: COP9 signalosome complex subunit 5a (357 aa).

Methionine 1 is modified (N-acetylmethionine). Positions 59–196 (VHISALALLK…IGAFRTYPEG (138 aa)) constitute an MPN domain. 3 residues coordinate Zn(2+): histidine 142, histidine 144, and aspartate 155. Positions 142-155 (HSHPGYGCWLSGID) match the JAMM motif motif. Residues 338 to 357 (ARQSKKSADDSSDPEPMITS) form a disordered region.

It belongs to the peptidase M67A family. CSN5 subfamily. Component of the CSN complex, probably composed of CSN1, CSN2, CSN3, CSN4, CSN5 (CSN5A or CSN5B), CSN6 (CSN6A or CSN6B), CSN7 and CSN8. CSN5A or CSN5B are present within distinct CSN complexes each containing only one copy of CSN5. Interacts with itself. In the complex, it is located in the center and probably interacts directly with CSN4 and CSN6A or CSN6B. Present also in subcomplex forms which inculdes CSN3. Also exists as monomeric form. Interacts with CYT1 in vitro, but not in planta. The cofactor is a divalent metal cation. In terms of tissue distribution, ubiquitously expressed. Highly expressed in flowers and roots. Expressed at lower level in seedlings and siliques.

It is found in the cytoplasm. The protein localises to the nucleus. In terms of biological role, probable protease subunit of the COP9 signalosome complex (CSN), a complex involved in various cellular and developmental processes such as photomorphogenesis and auxin and jasmonate responses. The CSN complex is an essential regulator of the ubiquitin (Ubl) conjugation pathway by mediating the deneddylation of the cullin subunits of the SCF-type E3 ligase complexes, leading to decrease the Ubl ligase activity of SCF. In the complex, it probably acts as the catalytic center that mediates the cleavage of Nedd8 from cullins. It however has no metalloprotease activity by itself and requires the other subunits of the CSN complex. The CSN complex is involved in repression of photomorphogenesis in darkness by regulating the activity of COP1-containing Ubl ligase complexes. The complex is also required for degradation of PSIAA6 by regulating the activity of the Ubl ligase SCF-TIR complex. Involved in CSN's deneddylation/derubylation activity. Required for the deneddylation of all cullins. Essential for the structural integrity of the CSN holocomplex. The chain is COP9 signalosome complex subunit 5a from Arabidopsis thaliana (Mouse-ear cress).